A 178-amino-acid polypeptide reads, in one-letter code: UPF0098 protein PYRAB11530 (178 aa).

The signal sequence occupies residues 1–22 (MRYLVPLLVFMVLGMGCLGGGG).

This sequence belongs to the UPF0098 family.

In Pyrococcus abyssi (strain GE5 / Orsay), this protein is UPF0098 protein PYRAB11530.